A 285-amino-acid polypeptide reads, in one-letter code: Transcription factor E2F6 (285 aa).

Residue K9 forms a Glycyl lysine isopeptide (Lys-Gly) (interchain with G-Cter in SUMO2) linkage. A DNA-binding region spans residues 50 to 129; the sequence is YVSMRKALKV…SKNHIRWIGS (80 aa). The DEF box signature appears at 95 to 129; it reads KLGVRKRRVYDITNVLDGIDLVEKKSKNHIRWIGS. Residues 130–222 form a dimerization region; it reads DLSNFGAVPQ…PAPKEDSITV (93 aa). The leucine-zipper stretch occupies residues 143-164; that stretch reads LQEELSDLSAMEDALDELIKDC. The tract at residues 173-285 is transcription repression; the sequence is DDKENERLAY…QSEEVLEVSN (113 aa). The segment at 240–285 is disordered; that stretch reads QGSHSSNKTSDNVGTSSSKSKPLEHPQPEKEENPPQQSEEVLEVSN. Residues 241 to 259 are compositionally biased toward polar residues; sequence GSHSSNKTSDNVGTSSSKS. Residues 260 to 272 show a composition bias toward basic and acidic residues; sequence KPLEHPQPEKEEN.

This sequence belongs to the E2F/DP family. Forms heterodimers with DP family members TFDP1 or TFDP2. Component of the DRTF1/E2F transcription factor complex. Part of the E2F6.com-1 complex in G0 phase composed of E2F6, MGA, MAX, TFDP1, CBX3, BAT8, EUHMTASE1, RING1, RNF2, MBLR, L3MBTL2 and YAF2. Component of some MLL1/MLL complex, at least composed of the core components KMT2A/MLL1, ASH2L, HCFC1/HCF1, WDR5 and RBBP5, as well as the facultative components BACC1, CHD8, E2F6, HSP70, INO80C, KANSL1, LAS1L, MAX, MCRS1, MGA, KAT8/MOF, PELP1, PHF20, PRP31, RING2, RUVB1/TIP49A, RUVB2/TIP49B, SENP3, TAF1, TAF4, TAF6, TAF7, TAF9 and TEX10.

Its subcellular location is the nucleus. Its function is as follows. Inhibitor of E2F-dependent transcription. Binds DNA cooperatively with DP proteins through the E2 recognition site, 5'-TTTC[CG]CGC-3'. Has a preference for the 5'-TTTCCCGC-3' E2F recognition site. E2F6 lacks the transcriptional activation and pocket protein binding domains. Appears to regulate a subset of E2F-dependent genes whose products are required for entry into the cell cycle but not for normal cell cycle progression. Represses expression of some meiosis-specific genes, including SLC25A31/ANT4. May silence expression via the recruitment of a chromatin remodeling complex containing histone H3-K9 methyltransferase activity. Overexpression delays the exit of cells from the S-phase. In Bos taurus (Bovine), this protein is Transcription factor E2F6.